The sequence spans 360 residues: MEVTPNHTQTVSGWAAMDESGKIVPFVFKRRENGVDDVTIKVKYCGMCHTDLHFIHNDWGITMYPVVPGHEITGVVTKVGTNVAGFKVGDRVGVGCIAASCLDCEHCRRSEENYCDKVALTYNGIFWDGSITYGGYSGMLVAHKRFVVRIPDTLPLDAAAPLLCAGITVYSPMKQHGMLQADAAGRRLGVVGLGGLGHVAVKFGKAFGLHVTVISTSPAKEREARENLKADNFVVSTDQKQMQAMTRSLDYIIDTVAATHSLGPILELLKVNGKLVLVGAPEKPVELPSFPLIFGKRTVSGSMTGGMKETQEMMDICGEHNITCDIEIVSTDRINDALARLARNDVRYRFVINVGGDSKL.

Residue Cys-48 participates in Zn(2+) binding. An NADP(+)-binding site is contributed by Thr-50. Positions 70, 71, 101, 104, 107, 115, and 164 each coordinate Zn(2+). Residues Thr-168, 192-197, 215-220, Thr-255, Gly-279, and 302-304 contribute to the NADP(+) site; these read GLGGLG, STSPAK, and SMT.

It belongs to the zinc-containing alcohol dehydrogenase family. In terms of assembly, homodimer. Zn(2+) serves as cofactor.

The catalysed reaction is (E)-cinnamyl alcohol + NADP(+) = (E)-cinnamaldehyde + NADPH + H(+). The enzyme catalyses (E)-coniferol + NADP(+) = (E)-coniferaldehyde + NADPH + H(+). It carries out the reaction (E)-sinapyl alcohol + NADP(+) = (E)-sinapaldehyde + NADPH + H(+). It catalyses the reaction (E)-4-coumaroyl alcohol + NADP(+) = (E)-4-coumaraldehyde + NADPH + H(+). The catalysed reaction is (E)-caffeyl alcohol + NADP(+) = (E)-caffeyl aldehyde + NADPH + H(+). Its pathway is aromatic compound metabolism; phenylpropanoid biosynthesis. Functionally, involved in lignin biosynthesis. Catalyzes the final step specific for the production of lignin monomers. Catalyzes the NADPH-dependent reduction of coniferaldehyde, 5-hydroxyconiferaldehyde, sinapaldehyde, 4-coumaraldehyde and caffeyl aldehyde to their respective alcohols. The polypeptide is Probable cinnamyl alcohol dehydrogenase 6 (Oryza sativa subsp. japonica (Rice)).